A 153-amino-acid polypeptide reads, in one-letter code: Actin-related protein 2/3 complex subunit 5-like protein (153 aa).

Phosphoserine is present on Ser64.

The protein belongs to the ARPC5 family. May be a component of the Arp2/3 complex in which it may replace ARPC5.

Its subcellular location is the cytoplasm. It localises to the cytoskeleton. The protein resides in the cell projection. Functionally, may function as component of the Arp2/3 complex which is involved in regulation of actin polymerization and together with an activating nucleation-promoting factor (NPF) mediates the formation of branched actin networks. The polypeptide is Actin-related protein 2/3 complex subunit 5-like protein (ARPC5L) (Bos taurus (Bovine)).